Here is a 233-residue protein sequence, read N- to C-terminus: Lectin (233 aa).

Residues asparagine 26 and asparagine 108 are each glycosylated (N-linked (GlcNAc...) asparagine). Residues glutamate 118 and aspartate 120 each contribute to the Mn(2+) site. Ca(2+) is bound by residues aspartate 120, tryptophan 122, asparagine 124, and glutamate 129. Residues glutamate 129 and histidine 134 each contribute to the Mn(2+) site.

The protein belongs to the leguminous lectin family. Monomer.

Its subcellular location is the secreted. Functionally, has metal-independent hemagglutinating activity towards erythrocytes from rabbit and human. Hemagglutinating activity is inhibited by glycoproteins fetuin, asialo-fetuin, thyroglobulin and azocasein but not by free carbohydrates. Inhibits ADP- and epinephrin-induced but not collagen-, fibrinogen, thrombin- or arachidonic acid-induced platelet aggregation in vitro. Has anticoagulant activity in vitro. The sequence is that of Lectin from Bauhinia forficata (Brazilian orchid-tree).